We begin with the raw amino-acid sequence, 216 residues long: MKIGLMGGTFNPIHMAHLRIAEEARELCGLDRVLFIPVADPPHKPLAGEVPFHQRCQMVRLAIAGNRAFELSEIEGQRPGKSYSIDTIGTFREQHPQAELYFIIGSDSFLELGLWRRYADILRSCNLIVVERPGRQVNDPLSALPVDIRGELRYTPASRSLEHVGGTRVHFFAGCLLDISSSEIRRLAATGRSITYLVPPQVEAYIKEQRIYSECP.

The protein belongs to the NadD family.

The enzyme catalyses nicotinate beta-D-ribonucleotide + ATP + H(+) = deamido-NAD(+) + diphosphate. It participates in cofactor biosynthesis; NAD(+) biosynthesis; deamido-NAD(+) from nicotinate D-ribonucleotide: step 1/1. Catalyzes the reversible adenylation of nicotinate mononucleotide (NaMN) to nicotinic acid adenine dinucleotide (NaAD). This is Probable nicotinate-nucleotide adenylyltransferase from Pelobacter propionicus (strain DSM 2379 / NBRC 103807 / OttBd1).